The sequence spans 341 residues: MDTARIAVVGAGVVGLSTAVCISKLVPRCSVTIISDKFTPDTTSDVAAGMLIPHTYPDTPIHTQKQWFRETFNHLFAIANSAEAGDAGVHLVSGWQIFQSTPTEEVPFWADVVLGFRKMTEAELKKFPQYVFGQAFTTLKCECPAYLPWLEKRIKGSGGWTLTRRIEDLWELHPSFDIVVNCSGLGSRQLAGDSKIFPVRGQVLQVQAPWVEHFIRDGSGLTYIYPGTSHVTLGGTRQKGDWNLSPDAENSREILSRCCALEPSLHGACNIREKVGLRPYRPGVRLQTELLARDGQRLPVVHHYGHGSGGISVHWGTALEAARLVSECVHALRTPIPKSNL.

Aspartate 36, lysine 37, threonine 43, serine 44, methionine 50, glycine 307, isoleucine 311, and serine 312 together coordinate FAD. Residues 339–341 (SNL) carry the Microbody targeting signal motif.

It belongs to the DAMOX/DASOX family. In terms of assembly, monomer. Interacts with PEX5; the interaction is direct and required for localization of DDO to the peroxisome. Interacts with DAOA; the interaction is direct and increases the degradation rate of DDO. FAD is required as a cofactor. May be S-nitrosylated. In terms of tissue distribution, expressed in epithelial cells of the proximal nephron tubules in the renal cortex (at protein level). In the brain, expressed in the frontal, temporal, and occipital lobes of the cortex, hippocampus, striatum, diencephalon, brainstem, cerebellum, spinal cord, plexus choroiderus and ependyma (at protein level). Expression is increased in the prefrontal cortex of schizophrenic patients. Levels are normal in the superior frontal gyrus of patients with Alzheimer's disease.

Its subcellular location is the peroxisome matrix. The protein resides in the cytoplasm. It localises to the cytosol. The catalysed reaction is D-aspartate + O2 + H2O = oxaloacetate + H2O2 + NH4(+). It carries out the reaction D-glutamate + O2 + H2O = H2O2 + 2-oxoglutarate + NH4(+). Inhibited by the benzodiazepine olanzapine. Inhibited by aminooxyacetic acid, thiolactomycin, malonate and meso-tartrate. Clozapine, haloperidol and chlorpromazine have no effect on activity. Not inhibited by sodium, potassium, magnesium, iron, calcium, cobalt, copper, nickel, manganese or zinc ions. Not inhibited by AMP, ADP, ATP, or cAMP. Not inhibited by pyridoxal 5'-phosphate. Functionally, selectively catalyzes the oxidative deamination of acidic amino acids. Suppresses the level of D-aspartate in the brain, an amino acid that can act as an agonist for glutamate receptors. Protects the organism from the toxicity of D-amino acids. May also function in the intestine. In Homo sapiens (Human), this protein is D-aspartate oxidase (DDO).